The primary structure comprises 72 residues: Protein kish-A (72 aa).

Residues 1–26 (MSAIFNFQSLLTVILLLICTCAYIRS) form the signal peptide. Residues 27–53 (LAPSLLDKNKSGLLGIFWKCARIGERK) are Extracellular-facing. N-linked (GlcNAc...) asparagine glycosylation is present at asparagine 35. The chain crosses the membrane as a helical span at residues 54–71 (SPYVAVCCVVMAFSILFM). Residue glutamine 72 is a topological domain, cytoplasmic.

The protein belongs to the KISH family.

Its subcellular location is the golgi apparatus membrane. In terms of biological role, involved in the early part of the secretory pathway. The protein is Protein kish-A (TMEM167A) of Taeniopygia guttata (Zebra finch).